We begin with the raw amino-acid sequence, 665 residues long: Putative phospholipid:diacylglycerol acyltransferase 2 (665 aa).

Residues 48 to 68 form a helical membrane-spanning segment; the sequence is LIGYLCTAWWLLLFLYHSVPV. Serine 237 functions as the Acyl-ester intermediate in the catalytic mechanism. Residues aspartate 567 and histidine 620 each act as charge relay system in the active site.

The protein belongs to the AB hydrolase superfamily. Lipase family.

It localises to the membrane. It catalyses the reaction a glycerophospholipid + a 1,2-diacyl-sn-glycerol = a monoacylglycerophospholipid + a triacyl-sn-glycerol. The chain is Putative phospholipid:diacylglycerol acyltransferase 2 (PDAT2) from Arabidopsis thaliana (Mouse-ear cress).